Consider the following 398-residue polypeptide: MKNNYDILIIGGGPAGALAAKTAAEAGNTVCLIEKRAAIGTPVRCAEGIGKELLKEFIKPDPRWIAADIERARIISPNGTAISLEQDRAGNEVGYVLDRKIFDRELVWQAAEAGADVIVKTRATAPIMENGAVRGAKVLSVGIPADIRAEVVIAADGTEAQFARRAGLDTVVPLREMMSCAQYLMTDIDIDAGSTDFYLGNEIAPEGYLWVFPKGNRTANVGIGISGRKSRDGSRAKDYLDRFVAKNFPNGKTIEAIAGGVPVCRPLACTVADGLMVAGDAARVVDPITGGGIGNAMYTGRLAAQVASKCIAAGDCSKEALMPYDAEWRASKMGTVLERNYKVKEYFVTLDDAKLNTLAESIAQSSLKEFSVLGLIKELIKRNPKLLLELKALKDTLS.

A15, E34, C45, A46, G48, R99, A123, D280, G292, and I293 together coordinate FAD. V372 contacts a 2,3-bis-O-(geranylgeranyl)-sn-glycerol 1-phospholipid.

The protein belongs to the geranylgeranyl reductase family. DGGGPL reductase subfamily. FAD serves as cofactor.

The enzyme catalyses a 2,3-bis-O-phytanyl-sn-glycerol 1-phospholipid + 8 oxidized 2[4Fe-4S]-[ferredoxin] = a 2,3-bis-O-(geranylgeranyl)-sn-glycerol 1-phospholipid + 8 reduced 2[4Fe-4S]-[ferredoxin] + 16 H(+). It catalyses the reaction 2,3-bis-O-(phytanyl)-sn-glycerol 1-phosphate + 8 oxidized 2[4Fe-4S]-[ferredoxin] = 2,3-bis-O-(geranylgeranyl)-sn-glycerol 1-phosphate + 8 reduced 2[4Fe-4S]-[ferredoxin] + 16 H(+). It carries out the reaction a 2,3-bis-O-phytanyl-sn-glycerol 1-phospholipid + 8 A = a 2,3-bis-O-(geranylgeranyl)-sn-glycerol 1-phospholipid + 8 AH2. The catalysed reaction is CDP-2,3-bis-O-(geranylgeranyl)-sn-glycerol + 8 AH2 = CDP-2,3-bis-O-(phytanyl)-sn-glycerol + 8 A. The enzyme catalyses archaetidylserine + 8 AH2 = 2,3-bis-O-phytanyl-sn-glycero-3-phospho-L-serine + 8 A. It participates in membrane lipid metabolism; glycerophospholipid metabolism. Is involved in the reduction of 2,3-digeranylgeranylglycerophospholipids (unsaturated archaeols) into 2,3-diphytanylglycerophospholipids (saturated archaeols) in the biosynthesis of archaeal membrane lipids. Catalyzes the formation of archaetidic acid (2,3-di-O-phytanyl-sn-glyceryl phosphate) from 2,3-di-O-geranylgeranylglyceryl phosphate (DGGGP) via the hydrogenation of each double bond of the isoprenoid chains. Is also probably able to reduce double bonds of geranyl groups in CDP-2,3-bis-O-(geranylgeranyl)-sn-glycerol and archaetidylserine, thus acting at various stages in the biosynthesis of archaeal membrane lipids. The sequence is that of Digeranylgeranylglycerophospholipid reductase from Methanoculleus marisnigri (strain ATCC 35101 / DSM 1498 / JR1).